Reading from the N-terminus, the 1388-residue chain is Rho-associated protein kinase 2 (1388 aa).

Positions 1–27 are disordered; it reads MSRPPPTGKMPGAPETAPGDGAGASRQ. The Protein kinase domain maps to 92–354; it reads YDVVKVIGRG…VEEIRQHPFF (263 aa). ATP is bound by residues 98 to 106 and Lys-121; that span reads IGRGAFGEV. Asp-214 (proton acceptor) is an active-site residue. An AGC-kinase C-terminal domain is found at 357-425; sequence DQWHWDNIRE…YRENLLLSDS (69 aa). Residues 363–784 are interaction with PPP1R12A; that stretch reads NIRETAAPVV…INELLKQKDV (422 aa). Positions 373-420 are interaction with NPM1; the sequence is PELSSDIDSSNFDDIEDDKGDVETFPIPKAFVGNQLPFIGFTYYRENL. At Thr-414 the chain carries Phosphothreonine; by ROCK2. Coiled coils occupy residues 429 to 1024 and 1053 to 1131; these read RETD…EKQL and DTDV…IGLD. Residues 497 to 573 enclose the REM-1 domain; it reads ALRQLEREKA…LDETNALLRT (77 aa). The residue at position 722 (Tyr-722) is a Phosphotyrosine; by SRC. The region spanning 979 to 1047 is the RhoBD domain; it reads TSDVANLANE…LAEIMNRKEP (69 aa). Residues 979–1047 are RHOA binding; the sequence is TSDVANLANE…LAEIMNRKEP (69 aa). Phosphoserine is present on Ser-1137. One can recognise a PH domain in the interval 1150 to 1349; sequence ESRLEGWLSL…WVSRLVKKIP (200 aa). The residue at position 1212 (Thr-1212) is a Phosphothreonine. The Phorbol-ester/DAG-type zinc-finger motif lies at 1260-1315; it reads GHEFIPTLYHFPTNCEACMKPLWHMFKPPPALECRRCHIKCHKDHMDKKEEIIAPC. The disordered stretch occupies residues 1345-1388; it reads VKKIPKKPPAPDPFARSSPRTSMKIQQNQSIRRPSRQLAPNKPS. 2 positions are modified to phosphoserine: Ser-1362 and Ser-1374. Over residues 1362–1376 the composition is skewed to polar residues; the sequence is SPRTSMKIQQNQSIR.

Belongs to the protein kinase superfamily. AGC Ser/Thr protein kinase family. Homodimer. Interacts with IRS1. Interacts with RAF1. Interacts with RHOA (activated by GTP), RHOB and RHOC. Interacts with PPP1R12A. Interacts with EP300. Interacts with CHORDC1. Interacts with BRCA2. Interacts with NPM1; this interaction enhances ROCK2 activity. Interacts with SORL1. Interacts with PJVK. It depends on Mg(2+) as a cofactor. In terms of processing, phosphorylation at Tyr-722 reduces its binding to RHOA and is crucial for focal adhesion dynamics. Dephosphorylation by PTPN11 stimulates its RHOA binding activity. Post-translationally, cleaved by granzyme B during apoptosis. This leads to constitutive activation of the kinase and membrane blebbing. Expressed in the brain (at protein level).

The protein localises to the cytoplasm. It localises to the cell membrane. Its subcellular location is the nucleus. It is found in the cytoskeleton. The protein resides in the microtubule organizing center. The protein localises to the centrosome. It carries out the reaction L-seryl-[protein] + ATP = O-phospho-L-seryl-[protein] + ADP + H(+). The enzyme catalyses L-threonyl-[protein] + ATP = O-phospho-L-threonyl-[protein] + ADP + H(+). Its activity is regulated as follows. Activated by RHOA binding. Inhibited by Y-27632. In terms of biological role, protein kinase which is a key regulator of actin cytoskeleton and cell polarity. Involved in regulation of smooth muscle contraction, actin cytoskeleton organization, stress fiber and focal adhesion formation, neurite retraction, cell adhesion and motility via phosphorylation of ADD1, BRCA2, CNN1, EZR, DPYSL2, EP300, MSN, MYL9/MLC2, NPM1, RDX, PPP1R12A and VIM. Phosphorylates SORL1 and IRF4. Acts as a negative regulator of VEGF-induced angiogenic endothelial cell activation. Positively regulates the activation of p42/MAPK1-p44/MAPK3 and of p90RSK/RPS6KA1 during myogenic differentiation. Plays an important role in the timely initiation of centrosome duplication. Inhibits keratinocyte terminal differentiation. May regulate closure of the eyelids and ventral body wall through organization of actomyosin bundles. Plays a critical role in the regulation of spine and synaptic properties in the hippocampus. Plays an important role in generating the circadian rhythm of the aortic myofilament Ca(2+) sensitivity and vascular contractility by modulating the myosin light chain phosphorylation. In Homo sapiens (Human), this protein is Rho-associated protein kinase 2 (ROCK2).